Here is a 453-residue protein sequence, read N- to C-terminus: Ezy-1 protein (453 aa).

The N-terminal stretch at 1 to 28 (MQLSNSLRSARSAAASSGCALASRPVVA) is a signal peptide. 3 disordered regions span residues 167-187 (SDGG…DADG), 272-307 (TGKA…SSGG), and 412-453 (SAGD…SPNM). A compositionally biased stretch (acidic residues) spans 279 to 300 (AEGDDGEGEEEGEAQDVGEDAV). Over residues 415–425 (DGHEPEPKRPE) the composition is skewed to basic and acidic residues.

The protein is Ezy-1 protein (Ezy-1) of Chlamydomonas reinhardtii (Chlamydomonas smithii).